The chain runs to 76 residues: Alpha/kappa-conotoxin-like fe14.1 (76 aa).

The signal sequence occupies residues 1–24 (MPSVRSVTCCCLLWMMLSVQLVTP). Residues 25–39 (GSPGTAQLSGHRTAR) constitute a propeptide that is removed on maturation. Cystine bridges form between cysteine 46–cysteine 61 and cysteine 50–cysteine 63. An Arginine amide modification is found at arginine 64. The propeptide occupies 65-76 (GKRDVVSSSMAV).

Belongs to the conotoxin J superfamily. As to expression, expressed by the venom duct.

It localises to the secreted. Highly inhibits both nicotinic acetylcholine receptors (neuronal (alpha-3/beta-4) and muscular (alpha-1/beta-1/epsilon/delta) subtypes) and the voltage-gated potassium channel Kv1.6/KCNA6 subtype. This is Alpha/kappa-conotoxin-like fe14.1 from Conus ferrugineus (Cone snail).